A 147-amino-acid polypeptide reads, in one-letter code: Large ribosomal subunit protein uL13 (147 aa).

The protein belongs to the universal ribosomal protein uL13 family. As to quaternary structure, part of the 50S ribosomal subunit.

Its function is as follows. This protein is one of the early assembly proteins of the 50S ribosomal subunit, although it is not seen to bind rRNA by itself. It is important during the early stages of 50S assembly. The polypeptide is Large ribosomal subunit protein uL13 (Nocardia farcinica (strain IFM 10152)).